We begin with the raw amino-acid sequence, 356 residues long: MSIKVLIVDDSAVVRQVLSQVFTAASGIEVMDVANDPYMAMDKMKARWPDVIVLDVEMPRMDGITFLKQLMASRPTPVVICSSLTQKGTDISMQAMAAGAVEVIAKPVSGVKGFLEESSHELVMAVRSAAAARMNRVRVMPSASGNPLETRPKLSADAILSAPTGSNVFATTERIIAIGTSTGGTQALEAVLTQLPRTCPGLAIVQHMPEKFTRSFADRLNSLSQIEVKEADNGDRILPGRALIAPGGKHMMVKRSGAYYQVEVVDGPLVSRHKPSVDVLFRSAAKFAGKNALGIIMTGMGDDGAKGLKEMHDCGAKTIAQDEESCVVFGMPKEAIKLGAADEVMPLELIAKAICR.

Positions 4 to 121 (KVLIVDDSAV…KGFLEESSHE (118 aa)) constitute a Response regulatory domain. Residue aspartate 55 is modified to 4-aspartylphosphate. In terms of domain architecture, CheB-type methylesterase spans 169-356 (FATTERIIAI…LELIAKAICR (188 aa)). Residues serine 181, histidine 207, and aspartate 303 contribute to the active site.

Belongs to the CheB family. Phosphorylated by CheA. Phosphorylation of the N-terminal regulatory domain activates the methylesterase activity.

It is found in the cytoplasm. The enzyme catalyses [protein]-L-glutamate 5-O-methyl ester + H2O = L-glutamyl-[protein] + methanol + H(+). It carries out the reaction L-glutaminyl-[protein] + H2O = L-glutamyl-[protein] + NH4(+). In terms of biological role, involved in chemotaxis. Part of a chemotaxis signal transduction system that modulates chemotaxis in response to various stimuli. Catalyzes the demethylation of specific methylglutamate residues introduced into the chemoreceptors (methyl-accepting chemotaxis proteins or MCP) by CheR. Also mediates the irreversible deamidation of specific glutamine residues to glutamic acid. This is Protein-glutamate methylesterase/protein-glutamine glutaminase 2 from Chromobacterium violaceum (strain ATCC 12472 / DSM 30191 / JCM 1249 / CCUG 213 / NBRC 12614 / NCIMB 9131 / NCTC 9757 / MK).